A 435-amino-acid polypeptide reads, in one-letter code: Gamma-glutamyl phosphate reductase (435 aa).

The protein belongs to the gamma-glutamyl phosphate reductase family.

It localises to the cytoplasm. It carries out the reaction L-glutamate 5-semialdehyde + phosphate + NADP(+) = L-glutamyl 5-phosphate + NADPH + H(+). Its pathway is amino-acid biosynthesis; L-proline biosynthesis; L-glutamate 5-semialdehyde from L-glutamate: step 2/2. In terms of biological role, catalyzes the NADPH-dependent reduction of L-glutamate 5-phosphate into L-glutamate 5-semialdehyde and phosphate. The product spontaneously undergoes cyclization to form 1-pyrroline-5-carboxylate. In Synechococcus sp. (strain CC9605), this protein is Gamma-glutamyl phosphate reductase.